Consider the following 118-residue polypeptide: Large ribosomal subunit protein bL20 (118 aa).

This sequence belongs to the bacterial ribosomal protein bL20 family.

In terms of biological role, binds directly to 23S ribosomal RNA and is necessary for the in vitro assembly process of the 50S ribosomal subunit. It is not involved in the protein synthesizing functions of that subunit. In Pectobacterium atrosepticum (strain SCRI 1043 / ATCC BAA-672) (Erwinia carotovora subsp. atroseptica), this protein is Large ribosomal subunit protein bL20.